Here is a 230-residue protein sequence, read N- to C-terminus: Ribosomal RNA large subunit methyltransferase E (230 aa).

Gly residues predominate over residues 1-13; that stretch reads MSGSGGKGGGRGG. Residues 1-22 form a disordered region; sequence MSGSGGKGGGRGGLHVRVKTAK. Residues Gly81, Trp83, Asp100, Asp116, and Asp140 each contribute to the S-adenosyl-L-methionine site. Lys180 functions as the Proton acceptor in the catalytic mechanism.

Belongs to the class I-like SAM-binding methyltransferase superfamily. RNA methyltransferase RlmE family.

The protein resides in the cytoplasm. It carries out the reaction uridine(2552) in 23S rRNA + S-adenosyl-L-methionine = 2'-O-methyluridine(2552) in 23S rRNA + S-adenosyl-L-homocysteine + H(+). Functionally, specifically methylates the uridine in position 2552 of 23S rRNA at the 2'-O position of the ribose in the fully assembled 50S ribosomal subunit. This chain is Ribosomal RNA large subunit methyltransferase E, found in Sphingopyxis alaskensis (strain DSM 13593 / LMG 18877 / RB2256) (Sphingomonas alaskensis).